The primary structure comprises 508 residues: Photosystem II CP47 reaction center protein (508 aa).

The next 6 helical transmembrane spans lie at 21 to 36 (AVHI…WAGS), 101 to 115 (IVFS…IWHW), 140 to 156 (GIHL…FGAF), 203 to 218 (IAAG…FHLS), 237 to 252 (VLSS…AFIV), and 457 to 472 (TFAL…HGAR).

It belongs to the PsbB/PsbC family. PsbB subfamily. As to quaternary structure, PSII is composed of 1 copy each of membrane proteins PsbA, PsbB, PsbC, PsbD, PsbE, PsbF, PsbH, PsbI, PsbJ, PsbK, PsbL, PsbM, PsbT, PsbX, PsbY, PsbZ, Psb30/Ycf12, at least 3 peripheral proteins of the oxygen-evolving complex and a large number of cofactors. It forms dimeric complexes. It depends on Binds multiple chlorophylls. PSII binds additional chlorophylls, carotenoids and specific lipids. as a cofactor.

The protein localises to the plastid. Its subcellular location is the chloroplast thylakoid membrane. In terms of biological role, one of the components of the core complex of photosystem II (PSII). It binds chlorophyll and helps catalyze the primary light-induced photochemical processes of PSII. PSII is a light-driven water:plastoquinone oxidoreductase, using light energy to abstract electrons from H(2)O, generating O(2) and a proton gradient subsequently used for ATP formation. This Cryptomeria japonica (Japanese cedar) protein is Photosystem II CP47 reaction center protein.